The sequence spans 110 residues: Keratin-associated protein 6-3 (110 aa).

This sequence belongs to the KRTAP type 6 family. As to quaternary structure, interacts with hair keratins.

Functionally, in the hair cortex, hair keratin intermediate filaments are embedded in an interfilamentous matrix, consisting of hair keratin-associated proteins (KRTAP), which are essential for the formation of a rigid and resistant hair shaft through their extensive disulfide bond cross-linking with abundant cysteine residues of hair keratins. The matrix proteins include the high-sulfur and high-glycine-tyrosine keratins. The sequence is that of Keratin-associated protein 6-3 from Homo sapiens (Human).